The sequence spans 727 residues: Translation initiation factor IF-2, mitochondrial (727 aa).

The N-terminal 29 residues, 1-29 (MNQKLLKLENLLRFHTICRQVHSPSQRRL), are a transit peptide targeting the mitochondrion. The 169-residue stretch at 178-346 (PRSPVVTVMG…ATIALAEILE (169 aa)) folds into the tr-type G domain. Residues 187-194 (GHVDHGKT) are G1. 187-194 (GHVDHGKT) serves as a coordination point for GTP. Residues 212–216 (GITQH) form a G2 region. GTP is bound by residues 234–237 (DTPG) and 288–291 (NKCD). Residues 234–237 (DTPG) form a G3 region. A G4 region spans residues 288 to 291 (NKCD). Residues 324–326 (SAL) form a G5 region. A Phosphothreonine modification is found at Thr-688.

It belongs to the TRAFAC class translation factor GTPase superfamily. Classic translation factor GTPase family. IF-2 subfamily. In terms of assembly, monomer.

It localises to the mitochondrion. In terms of biological role, one of the essential components for the initiation of protein synthesis. Protects formylmethionyl-tRNA from spontaneous hydrolysis and promotes its binding to the 30S ribosomal subunits. Also involved in the hydrolysis of GTP during the formation of the 70S ribosomal complex. In Mus musculus (Mouse), this protein is Translation initiation factor IF-2, mitochondrial (Mtif2).